Consider the following 552-residue polypeptide: Probable protein kinase UbiB (552 aa).

Positions H121–A504 constitute a Protein kinase domain. ATP is bound by residues L127–V135 and K149. The active-site Proton acceptor is the D284. The next 2 helical transmembrane spans lie at V501–H521 and I530–W550.

The protein belongs to the ABC1 family. UbiB subfamily.

The protein localises to the cell inner membrane. The protein operates within cofactor biosynthesis; ubiquinone biosynthesis [regulation]. Is probably a protein kinase regulator of UbiI activity which is involved in aerobic coenzyme Q (ubiquinone) biosynthesis. The polypeptide is Probable protein kinase UbiB (Xylella fastidiosa (strain M23)).